We begin with the raw amino-acid sequence, 215 residues long: Large ribosomal subunit protein uL16 (215 aa).

The disordered stretch occupies residues 1–22; the sequence is MGRRPARCYRQPKGKPYPKSRY.

The protein belongs to the universal ribosomal protein uL16 family.

The sequence is that of Large ribosomal subunit protein uL16 (RPL10) from Tetrahymena thermophila (strain SB210).